The sequence spans 473 residues: Vasculin (473 aa).

Disordered regions lie at residues 1–25 (MAQH…SSLN), 45–169 (RRHN…KSRA), and 191–342 (VGNL…QERD). Residue serine 49 is modified to Phosphoserine. Omega-N-methylarginine is present on arginine 87. A compositionally biased stretch (low complexity) spans 93-107 (GSSRSRSSIFHSGKS). Positions 119–133 (ETGRKEDKRERKQFE) are enriched in basic and acidic residues. Polar residues-rich tracts occupy residues 194 to 204 (LPSQPVKNGTG) and 251 to 286 (AFKS…QQPR). Residues serine 274, serine 276, serine 322, and serine 381 each carry the phosphoserine modification. A compositionally biased stretch (basic and acidic residues) spans 293–329 (MRTDKKSEFLKALKRDRVEEEHEDESRAGSEKDDDSF). Positions 444–473 (GPWKNSTFKPTTENDDTETSSSDTSDDDDV) are disordered. A compositionally biased stretch (acidic residues) spans 456 to 473 (ENDDTETSSSDTSDDDDV).

The protein belongs to the vasculin family. Interacts with GTF2B, GTF2F2, RNA polymerase II and TBP.

The protein localises to the nucleus. Functionally, functions as a GC-rich promoter-specific transactivating transcription factor. The sequence is that of Vasculin (GPBP1) from Pongo abelii (Sumatran orangutan).